Here is a 541-residue protein sequence, read N- to C-terminus: MVNQMRSAIVKVFSTKHSLTLPAPALHYIEEVLIENEIPEDEWMVGLEFWAKEYLKAEDSSSLVSLQALKKAYENLQLGTTEDTQVADPSEVNVESHFSVVDSFDMPAMRYDPVRSGFVQSKAQPSVAGQASSRSAFLRERWAIIKEIILRNENFTPPAIGGHDRANYLKLTSIRNLLGRAGQLFLLFGMLARNEEGKLCLEDGESRVVLDMEDAVPGEGLFTEGCMVLIEGEYTVEETVRVLAMGHPPSERRNIARSLHGHVDFLGGGAVSLKEEQKYNPTVLANTQISFVILSDVWLDHPRTMPALRQMFEGYANTAEYRPMVFVLCGNFCQGGWEGQEGLKRYSRGFNSLAELLQSIPLLHSSHFVFVPGPSDPWSSTTLPRPSLPSAFTTRLSNRIPNARFVSNPCRLKYFGMEIVICREDLMGKMMRNLVVVKEGEEMNMKRYLVQTILDQAHLSPLPISVRPTLWEYDHALRLYPMPSAVVLADKYERYELTYEGCHVFNPGKFVGGIGEDGWEFEWSMYYPATGRSERSVLTME.

It belongs to the DNA polymerase epsilon subunit B family. Heterotetramer. Consists of four subunits: POL2, DPB2, DPB3 and DPB4.

It localises to the nucleus. Its function is as follows. As accessory component of the DNA polymerase epsilon (DNA polymerase II) participates in chromosomal DNA replication. This chain is DNA polymerase epsilon subunit B (DPB2), found in Cryptococcus neoformans var. neoformans serotype D (strain B-3501A) (Filobasidiella neoformans).